The sequence spans 429 residues: Adenylosuccinate synthetase (429 aa).

GTP-binding positions include 12-18 (GDEGKGK) and 40-42 (GHT). The Proton acceptor role is filled by D13. Residues D13 and G40 each coordinate Mg(2+). IMP-binding positions include 13-16 (DEGK), 38-41 (NAGH), T128, R142, Q223, T238, and R302. H41 serves as the catalytic Proton donor. 298-304 (VNTGRPR) is a binding site for substrate. GTP contacts are provided by residues R304, 330–332 (KLD), and 412–414 (GVG).

This sequence belongs to the adenylosuccinate synthetase family. As to quaternary structure, homodimer. The cofactor is Mg(2+).

Its subcellular location is the cytoplasm. The catalysed reaction is IMP + L-aspartate + GTP = N(6)-(1,2-dicarboxyethyl)-AMP + GDP + phosphate + 2 H(+). It functions in the pathway purine metabolism; AMP biosynthesis via de novo pathway; AMP from IMP: step 1/2. Functionally, plays an important role in the de novo pathway of purine nucleotide biosynthesis. Catalyzes the first committed step in the biosynthesis of AMP from IMP. The sequence is that of Adenylosuccinate synthetase from Paenarthrobacter aurescens (strain TC1).